Here is a 155-residue protein sequence, read N- to C-terminus: SsrA-binding protein (155 aa).

This sequence belongs to the SmpB family.

It is found in the cytoplasm. Required for rescue of stalled ribosomes mediated by trans-translation. Binds to transfer-messenger RNA (tmRNA), required for stable association of tmRNA with ribosomes. tmRNA and SmpB together mimic tRNA shape, replacing the anticodon stem-loop with SmpB. tmRNA is encoded by the ssrA gene; the 2 termini fold to resemble tRNA(Ala) and it encodes a 'tag peptide', a short internal open reading frame. During trans-translation Ala-aminoacylated tmRNA acts like a tRNA, entering the A-site of stalled ribosomes, displacing the stalled mRNA. The ribosome then switches to translate the ORF on the tmRNA; the nascent peptide is terminated with the 'tag peptide' encoded by the tmRNA and targeted for degradation. The ribosome is freed to recommence translation, which seems to be the essential function of trans-translation. The chain is SsrA-binding protein from Bordetella bronchiseptica (strain ATCC BAA-588 / NCTC 13252 / RB50) (Alcaligenes bronchisepticus).